The primary structure comprises 318 residues: Acetyl-coenzyme A carboxylase carboxyl transferase subunit alpha (318 aa).

In terms of domain architecture, CoA carboxyltransferase C-terminal spans 39–297; sequence RLEKRSQTAL…SEALKAMVGK (259 aa).

This sequence belongs to the AccA family. As to quaternary structure, acetyl-CoA carboxylase is a heterohexamer composed of biotin carboxyl carrier protein (AccB), biotin carboxylase (AccC) and two subunits each of ACCase subunit alpha (AccA) and ACCase subunit beta (AccD).

The protein resides in the cytoplasm. The enzyme catalyses N(6)-carboxybiotinyl-L-lysyl-[protein] + acetyl-CoA = N(6)-biotinyl-L-lysyl-[protein] + malonyl-CoA. The protein operates within lipid metabolism; malonyl-CoA biosynthesis; malonyl-CoA from acetyl-CoA: step 1/1. Component of the acetyl coenzyme A carboxylase (ACC) complex. First, biotin carboxylase catalyzes the carboxylation of biotin on its carrier protein (BCCP) and then the CO(2) group is transferred by the carboxyltransferase to acetyl-CoA to form malonyl-CoA. This is Acetyl-coenzyme A carboxylase carboxyl transferase subunit alpha from Bartonella tribocorum (strain CIP 105476 / IBS 506).